A 328-amino-acid polypeptide reads, in one-letter code: DNA polymerase III subunit delta' (328 aa).

DNA polymerase III contains a core (composed of alpha, epsilon and theta chains) that associates with a tau subunit. This core dimerizes to form the POLIII' complex. PolIII' associates with the gamma complex (composed of gamma, delta, delta', psi and chi chains) and with the beta chain to form the complete DNA polymerase III complex.

It carries out the reaction DNA(n) + a 2'-deoxyribonucleoside 5'-triphosphate = DNA(n+1) + diphosphate. DNA polymerase III is a complex, multichain enzyme responsible for most of the replicative synthesis in bacteria. This DNA polymerase also exhibits 3' to 5' exonuclease activity. This is DNA polymerase III subunit delta' (holB) from Pseudomonas aeruginosa (strain ATCC 15692 / DSM 22644 / CIP 104116 / JCM 14847 / LMG 12228 / 1C / PRS 101 / PAO1).